The following is a 344-amino-acid chain: Follistatin (344 aa).

A signal peptide spans 1–29; that stretch reads MVRARHQPGGLCLLLLLLCQFMEDRSAQA. Positions 30-103 constitute a TB domain; sequence GNCWLRQAKN…TCENVDCGPG (74 aa). 18 cysteine pairs are disulfide-bonded: Cys-32–Cys-55, Cys-42–Cys-88, Cys-56–Cys-91, Cys-95–Cys-106, Cys-100–Cys-116, Cys-118–Cys-150, Cys-122–Cys-143, Cys-132–Cys-164, Cys-168–Cys-179, Cys-173–Cys-189, Cys-192–Cys-225, Cys-196–Cys-218, Cys-207–Cys-239, Cys-245–Cys-256, Cys-250–Cys-267, Cys-270–Cys-302, Cys-274–Cys-295, and Cys-284–Cys-316. Residues 94–117 form the Follistatin-like 1 domain; that stretch reads TCENVDCGPGKKCRMNKKNKPRCV. The Kazal-like 1 domain occupies 112-166; that stretch reads NKPRCVCAPDCSNITWKGPVCGLDGKTYRNECALLKARCKEQPELEVQYQGRCKK. An N-linked (GlcNAc...) asparagine glycan is attached at Asn-124. Positions 167 to 190 constitute a Follistatin-like 2 domain; the sequence is TCRDVFCPGSSTCVVDQTNNAYCV. Residues 186–241 enclose the Kazal-like 2 domain; the sequence is NAYCVTCNRICPEPASSEQYLCGNDGVTYSSACHLRKATCLLGRSIGLAYEGKCIK. In terms of domain architecture, Follistatin-like 3 spans 244–268; that stretch reads SCEDIQCTGGKKCLWDFKVGRGRCS. Residues 264–318 enclose the Kazal-like 3 domain; that stretch reads RGRCSLCDELCPDSKSDEPVCASDNATYASECAMKEAACSSGVLLEVKHSGSCNS. N-linked (GlcNAc...) asparagine glycosylation occurs at Asn-288. The disordered stretch occupies residues 314–344; the sequence is GSCNSISEDTEEEEEDEDQDYSFPISSILEW. The span at 321–333 shows a compositional bias: acidic residues; the sequence is EDTEEEEEDEDQD.

Interacts with GDF11. Interacts with activin A/INHBA. Interacts with MYOSTATIN/MSTN. Isoform 1 is the predominant isoform in serum but is undetectable in follicular fluid. In the embryo, strong expression is seen in the palatal epithelia, including the medial edge epithelial and midline epithelial seam of the palatal shelves. Less pronounced expression is also seen throughout the palatal shelf and tongue mesenchyme.

Its subcellular location is the secreted. The protein resides in the nucleus. It localises to the nucleolus. Functionally, multifunctional regulatory protein whose primary function is to antagonize members of the transforming growth factor beta (TGF-beta) superfamily including activin, myostatin, GDF11 or bone morphogenetic proteins (BMPs). Mechanistically, binds to these ligands in the extracellular space, blocking their type II receptor-binding site to inhibit downstream signaling. Plays an essential role in muscle fiber formation and growth both by preventing the repressive effects of myostatin and through SMAD3/AKT/mTOR signaling independently of myostatin. Also promotes neural differentiation by antagonizing the action BMP4. Acts as a specific inhibitor of the biosynthesis and secretion of pituitary follicle stimulating hormone (FSH) by sequestering activin A/INHBA. On the other hand, translocates into the nucleus where it down-regulates rRNA synthesis and ribosome biogenesis to maintain cellular energy homeostasis by binding to rDNA. This is Follistatin from Homo sapiens (Human).